We begin with the raw amino-acid sequence, 291 residues long: MEMO1 family protein TON_0132 (291 aa).

Belongs to the MEMO1 family.

The sequence is that of MEMO1 family protein TON_0132 from Thermococcus onnurineus (strain NA1).